A 346-amino-acid chain; its full sequence is Hydroxymethylglutaryl-CoA synthase (346 aa).

Position 28 (Asp-28) interacts with (3S)-3-hydroxy-3-methylglutaryl-CoA. The Proton donor/acceptor role is filled by Glu-80. Residues Cys-112 and Thr-153 each contribute to the (3S)-3-hydroxy-3-methylglutaryl-CoA site. Cys-112 acts as the Acyl-thioester intermediate in catalysis. Arg-199 contacts CoA. (3S)-3-hydroxy-3-methylglutaryl-CoA is bound by residues Thr-201 and His-234. Catalysis depends on His-234, which acts as the Proton donor/acceptor. A CoA-binding site is contributed by Lys-239. Lys-243, Asn-266, and Ser-296 together coordinate (3S)-3-hydroxy-3-methylglutaryl-CoA.

This sequence belongs to the thiolase-like superfamily. Archaeal HMG-CoA synthase family. In terms of assembly, interacts with acetoacetyl-CoA thiolase that catalyzes the precedent step in the pathway and with a DUF35 protein. The acetoacetyl-CoA thiolase/HMG-CoA synthase complex channels the intermediate via a fused CoA-binding site, which allows for efficient coupling of the endergonic thiolase reaction with the exergonic HMGCS reaction.

The enzyme catalyses acetoacetyl-CoA + acetyl-CoA + H2O = (3S)-3-hydroxy-3-methylglutaryl-CoA + CoA + H(+). The protein operates within metabolic intermediate biosynthesis; (R)-mevalonate biosynthesis; (R)-mevalonate from acetyl-CoA: step 2/3. Its function is as follows. Catalyzes the condensation of acetyl-CoA with acetoacetyl-CoA to form 3-hydroxy-3-methylglutaryl-CoA (HMG-CoA). Functions in the mevalonate (MVA) pathway leading to isopentenyl diphosphate (IPP), a key precursor for the biosynthesis of isoprenoid compounds that are building blocks of archaeal membrane lipids. This Methanothermobacter thermautotrophicus (strain ATCC 29096 / DSM 1053 / JCM 10044 / NBRC 100330 / Delta H) (Methanobacterium thermoautotrophicum) protein is Hydroxymethylglutaryl-CoA synthase.